The following is a 361-amino-acid chain: RNA 3'-terminal phosphate cyclase (361 aa).

ATP is bound by residues Q109 and 293–297 (HLADQ). The active-site Tele-AMP-histidine intermediate is H319.

This sequence belongs to the RNA 3'-terminal cyclase family. Type 1 subfamily.

The protein resides in the cytoplasm. The enzyme catalyses a 3'-end 3'-phospho-ribonucleotide-RNA + ATP = a 3'-end 2',3'-cyclophospho-ribonucleotide-RNA + AMP + diphosphate. Catalyzes the conversion of 3'-phosphate to a 2',3'-cyclic phosphodiester at the end of RNA. The mechanism of action of the enzyme occurs in 3 steps: (A) adenylation of the enzyme by ATP; (B) transfer of adenylate to an RNA-N3'P to produce RNA-N3'PP5'A; (C) and attack of the adjacent 2'-hydroxyl on the 3'-phosphorus in the diester linkage to produce the cyclic end product. The biological role of this enzyme is unknown but it is likely to function in some aspects of cellular RNA processing. This chain is RNA 3'-terminal phosphate cyclase, found in Methylococcus capsulatus (strain ATCC 33009 / NCIMB 11132 / Bath).